The following is a 951-amino-acid chain: Bifunctional glutamine synthetase adenylyltransferase/adenylyl-removing enzyme (951 aa).

Residues 1 to 440 (MLPLPSELQI…VFDDLIGDET (440 aa)) form an adenylyl removase region. Residues 449-951 (HGLYKSLWQD…WLAANDANVS (503 aa)) are adenylyl transferase.

It belongs to the GlnE family. Mg(2+) is required as a cofactor.

It catalyses the reaction [glutamine synthetase]-O(4)-(5'-adenylyl)-L-tyrosine + phosphate = [glutamine synthetase]-L-tyrosine + ADP. The catalysed reaction is [glutamine synthetase]-L-tyrosine + ATP = [glutamine synthetase]-O(4)-(5'-adenylyl)-L-tyrosine + diphosphate. Its function is as follows. Involved in the regulation of glutamine synthetase GlnA, a key enzyme in the process to assimilate ammonia. When cellular nitrogen levels are high, the C-terminal adenylyl transferase (AT) inactivates GlnA by covalent transfer of an adenylyl group from ATP to specific tyrosine residue of GlnA, thus reducing its activity. Conversely, when nitrogen levels are low, the N-terminal adenylyl removase (AR) activates GlnA by removing the adenylyl group by phosphorolysis, increasing its activity. The regulatory region of GlnE binds the signal transduction protein PII (GlnB) which indicates the nitrogen status of the cell. The chain is Bifunctional glutamine synthetase adenylyltransferase/adenylyl-removing enzyme from Yersinia pseudotuberculosis serotype O:1b (strain IP 31758).